A 201-amino-acid chain; its full sequence is Ribonuclease HII (201 aa).

In terms of domain architecture, RNase H type-2 spans 12-201 (DLVAGVDEVG…VRELLDASVE (190 aa)). Residues Asp-18, Glu-19, and Asp-110 each contribute to the a divalent metal cation site.

The protein belongs to the RNase HII family. It depends on Mn(2+) as a cofactor. The cofactor is Mg(2+).

It localises to the cytoplasm. It catalyses the reaction Endonucleolytic cleavage to 5'-phosphomonoester.. In terms of biological role, endonuclease that specifically degrades the RNA of RNA-DNA hybrids. The chain is Ribonuclease HII from Pseudomonas paraeruginosa (strain DSM 24068 / PA7) (Pseudomonas aeruginosa (strain PA7)).